We begin with the raw amino-acid sequence, 494 residues long: Glutamyl-tRNA(Gln) amidotransferase subunit A (494 aa).

Active-site charge relay system residues include lysine 72 and serine 147. The active-site Acyl-ester intermediate is serine 171.

This sequence belongs to the amidase family. GatA subfamily. In terms of assembly, heterotrimer of A, B and C subunits.

The catalysed reaction is L-glutamyl-tRNA(Gln) + L-glutamine + ATP + H2O = L-glutaminyl-tRNA(Gln) + L-glutamate + ADP + phosphate + H(+). In terms of biological role, allows the formation of correctly charged Gln-tRNA(Gln) through the transamidation of misacylated Glu-tRNA(Gln) in organisms which lack glutaminyl-tRNA synthetase. The reaction takes place in the presence of glutamine and ATP through an activated gamma-phospho-Glu-tRNA(Gln). This chain is Glutamyl-tRNA(Gln) amidotransferase subunit A, found in Methylacidiphilum infernorum (isolate V4) (Methylokorus infernorum (strain V4)).